A 964-amino-acid chain; its full sequence is DNA mismatch repair protein MSH2 (964 aa).

ATP is bound at residue 688 to 695 (GPNMGGKS). Residues 851 to 964 (DQSFGIHVAE…YLKYIKALLL (114 aa)) are interaction with MSH6.

Belongs to the DNA mismatch repair MutS family. In terms of assembly, heterodimer consisting of MSH2-MSH6 (MutS alpha) or MSH2-MSH3 (MutS beta). Both heterodimers form a ternary complex with MutL alpha (MLH1-PMS1). MutS beta also forms a ternary complex with MutL beta (MLH1-MLH3), and possibly with a MLH1-MLH2 heterodimer. Both heterodimers interact with proliferating cell nuclear antigen (PCNA/POL30). This interaction is disrupted upon binding of the MutS heterodimers to mismatch DNA. Interacts with SAW1.

Its subcellular location is the nucleus. With respect to regulation, inhibited by Cd(2+). Its function is as follows. Component of the post-replicative DNA mismatch repair system (MMR). Forms two different heterodimers: MutS alpha (MSH2-MSH6 heterodimer) and MutS beta (MSH2-MSH3 heterodimer), which bind to DNA mismatches thereby initiating DNA repair. MSH2 seems to act as a scaffold for the other MutS homologs that provide substrate-binding and substrate specificity. When bound, heterodimers bend the DNA helix and shield approximately 20 base pairs. MutS alpha acts mainly to repair base-base and single insertion-deletion mismatches that occur during replication, but can also repair longer insertion-deletion loops (IDLs), although with decreasing efficiency as the size of the extrahelical loop increases. MutS beta acts mainly to repair IDLs from 2 to 13 nucleotides in size, but can also repair base-base and single insertion-deletion mismatches. After mismatch binding, MutS alpha or beta form a ternary complex with a MutL heterodimer, which is thought to be responsible for directing the downstream MMR events, including strand discrimination, excision, and resynthesis. ATP binding and hydrolysis play a pivotal role in mismatch repair functions. Both subunits bind ATP, but with differing affinities, and their ATPase kinetics are also very different. MSH6 binds and hydrolyzes ATP rapidly, whereas MSH2 catalyzes ATP at a substantially slower rate. Binding to a mismatched base pair suppresses MSH6-catalyzed ATP hydrolysis, but not the activity of MSH2. ATP binding to both subunits is necessary to trigger a change in MutS alpha interaction with mismatched DNA, converting MutS alpha into a sliding clamp capable of hydrolysis-independent movement along DNA, and also facilitates formation of ternary complexes containing MutS and MutL proteins and the mismatch. MutS beta also has a role in regulation of heteroduplex formation during mitotic and meiotic recombination. MutS beta binds to DNA flap structures predicted to form during recombination, and is required for 3' non-homologous tail removal (NHTR). MutS beta-binding alters the DNA conformation of its substrate at the ds/ssDNA junction and may facilitate its recognition and/or cleavage by the downstream nucleotide excision repair (NER) RAD1-RAD10 endonuclease. This is DNA mismatch repair protein MSH2 (MSH2) from Saccharomyces cerevisiae (strain ATCC 204508 / S288c) (Baker's yeast).